We begin with the raw amino-acid sequence, 150 residues long: Male-specific protein scotti (150 aa).

The disordered stretch occupies residues 60–84; that stretch reads PPMAVFPARGGPNGGPPRLRKKRSF. N-linked (GlcNAc...) asparagine glycosylation is present at Asn-131.

This sequence belongs to the male-specific scotti family.

Functionally, post-meiotically transcribed gene that has a role in late spermiogenesis; required for actin cone progression during spermatid individualization. This chain is Male-specific protein scotti, found in Drosophila yakuba (Fruit fly).